A 282-amino-acid polypeptide reads, in one-letter code: Bis(5'-nucleosyl)-tetraphosphatase, symmetrical (282 aa).

The protein belongs to the Ap4A hydrolase family.

It carries out the reaction P(1),P(4)-bis(5'-adenosyl) tetraphosphate + H2O = 2 ADP + 2 H(+). Functionally, hydrolyzes diadenosine 5',5'''-P1,P4-tetraphosphate to yield ADP. In Escherichia coli O81 (strain ED1a), this protein is Bis(5'-nucleosyl)-tetraphosphatase, symmetrical.